The following is a 194-amino-acid chain: Holliday junction branch migration complex subunit RuvA (194 aa).

Residues 1-64 (MISRLTGKLV…EDAHLLFGFA (64 aa)) form a domain I region. The interval 65–143 (TAEERKTFRQ…AHTVTDGLFA (79 aa)) is domain II. Positions 144–147 (AAPA) are flexible linker. Residues 147–194 (AADETEDIVSTLLALGYSEREAKAAVKGVPEGTDVGEGVRLALKNLLK) form a domain III region.

Belongs to the RuvA family. As to quaternary structure, homotetramer. Forms an RuvA(8)-RuvB(12)-Holliday junction (HJ) complex. HJ DNA is sandwiched between 2 RuvA tetramers; dsDNA enters through RuvA and exits via RuvB. An RuvB hexamer assembles on each DNA strand where it exits the tetramer. Each RuvB hexamer is contacted by two RuvA subunits (via domain III) on 2 adjacent RuvB subunits; this complex drives branch migration. In the full resolvosome a probable DNA-RuvA(4)-RuvB(12)-RuvC(2) complex forms which resolves the HJ.

The protein resides in the cytoplasm. Functionally, the RuvA-RuvB-RuvC complex processes Holliday junction (HJ) DNA during genetic recombination and DNA repair, while the RuvA-RuvB complex plays an important role in the rescue of blocked DNA replication forks via replication fork reversal (RFR). RuvA specifically binds to HJ cruciform DNA, conferring on it an open structure. The RuvB hexamer acts as an ATP-dependent pump, pulling dsDNA into and through the RuvAB complex. HJ branch migration allows RuvC to scan DNA until it finds its consensus sequence, where it cleaves and resolves the cruciform DNA. The protein is Holliday junction branch migration complex subunit RuvA of Neisseria meningitidis serogroup C (strain 053442).